A 481-amino-acid chain; its full sequence is Cis-aconitate decarboxylase (481 aa).

The interval 462–481 (SPPEVASNSPACNNSITNLS) is disordered. Positions 467–481 (ASNSPACNNSITNLS) are enriched in polar residues.

It belongs to the PrpD family. Homodimer. In terms of tissue distribution, expressed in LPS-tolerized macrophages (at protein level). Expressed in peripheral blood mononuclear cells (PBMCs), microglia and macrophage cells.

It localises to the mitochondrion. The enzyme catalyses cis-aconitate + H(+) = itaconate + CO2. Functionally, cis-aconitate decarboxylase that catalyzes production of itaconate and is involved in the inhibition of the inflammatory response. Acts as a negative regulator of the Toll-like receptors (TLRs)-mediated inflammatory innate response by stimulating the tumor necrosis factor alpha-induced protein TNFAIP3 expression via reactive oxygen species (ROS) in LPS-tolerized macrophages. Involved in antimicrobial response of innate immune cells; ACOD1-mediated itaconic acid production contributes to the antimicrobial activity of macrophages by generating itaconate, leading to alkylation of proteins, such as TFEB. Involved in antiviral response following infection by flavivirus in neurons: ACOD1-mediated itaconate production inhibits the activity of succinate dehydrogenase, generating a metabolic state in neurons that suppresses replication of viral genomes. Plays a role in the embryo implantation. In Homo sapiens (Human), this protein is Cis-aconitate decarboxylase.